Reading from the N-terminus, the 596-residue chain is Zinc finger E-box-binding homeobox protein zag-1 (596 aa).

The C2H2-type 1 zinc-finger motif lies at Phe-24–His-46. Residues Phe-52–Ser-72 form a C2H2-type 2; degenerate zinc finger. Residues Leu-133 to Pro-145 show a composition bias toward polar residues. 3 disordered regions span residues Leu-133–Arg-225, Asn-324–Trp-369, and Gly-395–Ser-421. Positions Ser-165–Asp-179 are enriched in basic and acidic residues. Residues Pro-188–Gln-200 are compositionally biased toward polar residues. Residues Asn-201–Lys-216 are compositionally biased toward low complexity. The segment at residues Pro-223–Asn-282 is a DNA-binding region (homeobox). A compositionally biased stretch (basic and acidic residues) spans Gln-331 to Pro-355. 2 C2H2-type zinc fingers span residues Phe-481–His-503 and Tyr-509–His-531. Residues Phe-537–Tyr-560 form a C2H2-type 5; degenerate zinc finger. Positions Gln-569–Thr-596 are disordered. The span at Asn-578 to Asn-590 shows a compositional bias: low complexity.

As to expression, expressed in the six touch receptor neurons (TRNs) but not in the FLP and PVD neurons. Expressed in the M4 cholinergic motor neuron.

It localises to the nucleus. Transcription factor. Down-regulates expression of genes involved in either the synthesis or reuptake of serotonin, dopamine and GABA. Acts as a transcriptional repressor to regulate multiple, discrete, neuron-specific aspects of terminal differentiation, including cell migration, axonal development and gene expression. Promotes touch receptor neuron differentiation by repressing the expression of egl-44 and egl-46. As egl-44 and egl-46, probably acting as a heterodimer, repress expression of zag-1 in FLP neurons, together these proteins form a bistable, negative-feedback loop that regulates the choice between neuronal fates. Required for axon guidance. Involved in the proper development of the pharynx. Required for pharynx isthmus peristalsis, probably via a role in the differentiation of the M4 cholinergic motor neuron. Directly represses its own transcription by interacting with conserved E-box sequence motifs 5'-CACCTG-3' in its own promoter. May also act as a transcriptional activator of the homeodomain ceh-28. This chain is Zinc finger E-box-binding homeobox protein zag-1, found in Caenorhabditis elegans.